Reading from the N-terminus, the 133-residue chain is Fatty acid-binding protein, heart (133 aa).

An N-acetylalanine modification is found at Ala2. The residue at position 8 (Thr8) is a Phosphothreonine. Tyr20 carries the phosphotyrosine; by Tyr-kinases modification. Ser23 is modified (phosphoserine). At Thr30 the chain carries Phosphothreonine. Ser83 carries the post-translational modification Phosphoserine. Residue Arg127–Tyr129 coordinates (9Z)-octadecenoate. Arg127 to Tyr129 serves as a coordination point for hexadecanoate. An octadecanoate-binding site is contributed by Arg127–Tyr129.

Heart, but also skeletal muscle, kidney, brain and mammary gland.

The protein resides in the cytoplasm. Functionally, FABPs are thought to play a role in the intracellular transport of long-chain fatty acids and their acyl-CoA esters. This Rattus norvegicus (Rat) protein is Fatty acid-binding protein, heart (Fabp3).